Consider the following 181-residue polypeptide: MSFQEVWEKEPMKKPRIQKVTVNFGVGEAGDRLTIGAKVIEELTGQSPVRTLAKQTNPAFGIRKKLPIGLKVTLRGKKAEEFLKNAFTAFKACGKTLFASSFDQVGNFSFGVPEHIDFPGQKYDPSVGIYGMDICVTFEKSGYRVKSRKVKRSHIPEKHLVTKDEAIEYIQAKFDTEVVRE.

This sequence belongs to the universal ribosomal protein uL5 family. Part of the 50S ribosomal subunit; contacts the 5S rRNA and probably tRNA. Forms a bridge to the 30S subunit in the 70S ribosome.

Functionally, this is one of the proteins that bind and probably mediate the attachment of the 5S RNA into the large ribosomal subunit, where it forms part of the central protuberance. In the 70S ribosome it contacts protein S13 of the 30S subunit (bridge B1b), connecting the 2 subunits; this bridge is implicated in subunit movement. May contact the P site tRNA; the 5S rRNA and some of its associated proteins might help stabilize positioning of ribosome-bound tRNAs. This is Large ribosomal subunit protein uL5 from Methanococcus maripaludis (strain DSM 14266 / JCM 13030 / NBRC 101832 / S2 / LL).